Consider the following 219-residue polypeptide: Ras-related protein Rab-3 (219 aa).

GTP-binding positions include 29–37, 48–54, 77–81, 135–138, and 165–167; these read GNSSVGKTS, TSAFVST, DTAGQ, NKCD, and SAK. The Effector region motif lies at 51–59; that stretch reads FVSTVGIDF. The segment at 191 to 219 is disordered; that stretch reads LDKDPQQQPKGQKLEANPTQKPAQQQCNC. Polar residues predominate over residues 207 to 219; the sequence is NPTQKPAQQQCNC. 2 S-geranylgeranyl cysteine lipidation sites follow: C217 and C219. C219 is modified (cysteine methyl ester).

The protein belongs to the small GTPase superfamily. Rab family.

It is found in the cell membrane. Functionally, involved in exocytosis by regulating a late step in synaptic vesicle fusion. Could play a role in neurotransmitter release by regulating membrane flow in the nerve terminal. Plays a role in the recruitment of endophilin unc-57 to synaptic vesicles. Probably by controlling dense-core vesicle trafficking, plays a role in the AVG neuron-mediated formation of the right axon tract of the ventral nerve cord. This chain is Ras-related protein Rab-3 (rab-3), found in Caenorhabditis elegans.